Reading from the N-terminus, the 55-residue chain is Large ribosomal subunit protein bL33 (55 aa).

The protein belongs to the bacterial ribosomal protein bL33 family.

This Paenarthrobacter aurescens (strain TC1) protein is Large ribosomal subunit protein bL33.